The chain runs to 318 residues: Magnetosome protein MamM (318 aa).

A transmembrane domain (TMD) region spans residues Met1–Asp210. The next 4 helical transmembrane spans lie at Ile13–Leu33, Ala39–Ile59, Phe81–His101, and Leu117–Ser137. Residues His211 to Asn318 form a C-terminal domain (CTD) region. Fe cation contacts are provided by Asp249, His264, His285, and Glu289.

This sequence belongs to the cation diffusion facilitator (CDF) transporter (TC 2.A.4) family. In terms of assembly, forms homodimers via its C-terminal domain (CTD) in the presence of metal cations. Interacts with MamB via their CTD. Isolated CTD forms homodimers.

It localises to the magnetosome membrane. The protein localises to the cell inner membrane. Essential for magnetosome formation; required for stable accumulation of MamB. May nucleate iron crystal formation. Probably binds and transports iron. Binds divalent cations, possibly up to 3 Zn(2+) per dimer in vitro, probably iron in vivo. One of 7 genes (mamLQBIEMO) able to induce magnetosome membrane biogenesis; coexpression of mamLQRBIEMO in a deletion of the 17 gene mamAB operon restores magnetosome vesicle formation but not magnetite biosynthesis. This is Magnetosome protein MamM from Magnetospirillum gryphiswaldense (strain DSM 6361 / JCM 21280 / NBRC 15271 / MSR-1).